The following is a 408-amino-acid chain: Ubiquitin-associated domain-containing protein 1 (408 aa).

The region spanning 14–98 is the Ubiquitin-like domain; it reads LRLQVCTMEG…LLLIKKRAPP (85 aa). The interval 100-119 is disordered; the sequence is LPKMADVSAEEKRKQEQKAP. Basic and acidic residues predominate over residues 108–119; the sequence is AEEKRKQEQKAP. A UBA 1 domain is found at 185 to 231; sequence DEDEEDRVDEIALRQLTEMGFPESRAVKALRLNHMSVTQAMEWLIEH. The disordered stretch occupies residues 235–275; that stretch reads PAVDAPLPGQTPSEAAAEAGASSAEATAGPSSEAGGEEAKD. The span at 245–268 shows a compositional bias: low complexity; sequence TPSEAAAEAGASSAEATAGPSSEA. Residues 291–331 enclose the UBA 2 domain; it reads RPDPRAVIALMEMGFDEKEVVDALRVNNNQQNAACEWLLGD. The region spanning 356–395 is the STI1 domain; that stretch reads NPVVQLGLTNPKTLLAFEDMLENPLNSTQWMNDPETGPVM.

As to quaternary structure, component of the KPC complex.

Its subcellular location is the cytoplasm. It functions in the pathway protein modification; protein ubiquitination. In terms of biological role, non-catalytic component of the KPC complex, a E3 ubiquitin-protein ligase complex that mediates polyubiquitination of target proteins, such as CDKN1B and NFKB1. Within the KPC complex, UBAC1 acts as an adapter that promotes the transfer of target proteins that have been polyubiquitinated by RNF123/KPC1 to the 26S proteasome. The sequence is that of Ubiquitin-associated domain-containing protein 1 (UBAC1) from Gallus gallus (Chicken).